We begin with the raw amino-acid sequence, 102 residues long: Large ribosomal subunit protein bL21 (102 aa).

Belongs to the bacterial ribosomal protein bL21 family. As to quaternary structure, part of the 50S ribosomal subunit. Contacts protein L20.

This protein binds to 23S rRNA in the presence of protein L20. In Pelobacter propionicus (strain DSM 2379 / NBRC 103807 / OttBd1), this protein is Large ribosomal subunit protein bL21.